The sequence spans 161 residues: Protein OPG060 (161 aa).

Belongs to the orthopoxvirus OPG058 family.

The sequence is that of Protein OPG060 (OPG060) from Homo sapiens (Human).